A 91-amino-acid chain; its full sequence is DNA-binding protein HRL18 (91 aa).

This sequence belongs to the bacterial histone-like protein family.

Functionally, histone-like DNA-binding protein which is capable of wrapping DNA to stabilize it, and thus to prevent its denaturation under extreme environmental conditions. The protein is DNA-binding protein HRL18 of Rhizobium leguminosarum.